The sequence spans 95 residues: Co-chaperonin GroES (95 aa).

The protein belongs to the GroES chaperonin family. As to quaternary structure, heptamer of 7 subunits arranged in a ring. Interacts with the chaperonin GroEL.

The protein resides in the cytoplasm. Functionally, together with the chaperonin GroEL, plays an essential role in assisting protein folding. The GroEL-GroES system forms a nano-cage that allows encapsulation of the non-native substrate proteins and provides a physical environment optimized to promote and accelerate protein folding. GroES binds to the apical surface of the GroEL ring, thereby capping the opening of the GroEL channel. The polypeptide is Co-chaperonin GroES (Pelobacter propionicus (strain DSM 2379 / NBRC 103807 / OttBd1)).